A 220-amino-acid chain; its full sequence is Meiotic nuclear division protein 1 homolog (220 aa).

Residues 76–147 adopt a coiled-coil conformation; sequence SKALHARKRR…KVEIEKYQEC (72 aa).

This sequence belongs to the MND1 family.

It is found in the nucleus. Required for proper homologous chromosome pairing and efficient cross-over and intragenic recombination during meiosis. Stimulates both DMC1- and RAD51-mediated homologous strand assimilation, which is required for the resolution of meiotic double-strand breaks. This is Meiotic nuclear division protein 1 homolog from Danio rerio (Zebrafish).